The following is a 168-amino-acid chain: Ribosome maturation factor RimM (168 aa).

Residues 93-168 (EDEFYQSDLV…IVLNIPEFID (76 aa)) enclose the PRC barrel domain.

Belongs to the RimM family. In terms of assembly, binds ribosomal protein uS19.

The protein resides in the cytoplasm. Its function is as follows. An accessory protein needed during the final step in the assembly of 30S ribosomal subunit, possibly for assembly of the head region. Essential for efficient processing of 16S rRNA. May be needed both before and after RbfA during the maturation of 16S rRNA. It has affinity for free ribosomal 30S subunits but not for 70S ribosomes. The protein is Ribosome maturation factor RimM of Wolbachia pipientis wMel.